Reading from the N-terminus, the 396-residue chain is MALRTIDALELAGKRVFIRVDFNVPLDPQGRVTDDARIRAALPTIRHAIQAKAKVILASHLGRPKGKPEDRQKLTLEPAAVRLSELLSQDVILADDCVGDGVKKLVRDLKDGHVLLLENLRFHPEEEKNDEAFARELASLADVWVNDAFGTAHRAHASTAGMARFVKEKAAGFLVQKEVEYLGKALGSPARPFVAIVGGAKVSDKIKVLENLIAKADAICVGGAMAYTFLKAQGVPVGKSLVEEDKLELARQILERAEARKVDLLLPVDHVCGAEPKETAERVVVNDRAIPDGLMGLDIGPKTLDRYRQRIAAAKTVFWNGPMGLFEQKPWSEGTFGVAKAMAASPAVTVVGGGDSAAAVEQAGLVDAMKHVSTGGGASLEFIEGRELPGVKACEE.

Substrate is bound by residues 21 to 23, arginine 37, 60 to 63, arginine 121, and arginine 154; these read DFN and HLGR. Residues lysine 205, glycine 296, glutamate 327, and 353 to 356 contribute to the ATP site; that span reads GGDS.

The protein belongs to the phosphoglycerate kinase family. As to quaternary structure, monomer.

The protein resides in the cytoplasm. The enzyme catalyses (2R)-3-phosphoglycerate + ATP = (2R)-3-phospho-glyceroyl phosphate + ADP. The protein operates within carbohydrate degradation; glycolysis; pyruvate from D-glyceraldehyde 3-phosphate: step 2/5. The protein is Phosphoglycerate kinase of Anaeromyxobacter dehalogenans (strain 2CP-1 / ATCC BAA-258).